The sequence spans 124 residues: Class I hydrophobin 1 (124 aa).

A signal peptide spans 1 to 18 (MRFSIATVVLSLAAMVVA). Cystine bridges form between Cys35–Cys85, Cys43–Cys79, Cys44–Cys63, and Cys86–Cys97.

The protein belongs to the fungal hydrophobin family.

Its subcellular location is the secreted. It localises to the cell wall. Aerial growth, conidiation, and dispersal of filamentous fungi in the environment rely upon a capability of their secreting small amphipathic proteins called hydrophobins (HPBs) with low sequence identity. Class I can self-assemble into an outermost layer of rodlet bundles on aerial cell surfaces, conferring cellular hydrophobicity that supports fungal growth, development and dispersal; whereas Class II form highly ordered films at water-air interfaces through intermolecular interactions but contribute nothing to the rodlet structure. In Botryotinia fuckeliana, hydrophobins are not involved in conferring surface hydrophobicity to conidia and aerial hyphae and their function in sclerotia and fruiting bodies remains to be investigated. The sequence is that of Class I hydrophobin 1 (Bhp1) from Botryotinia fuckeliana (strain B05.10) (Noble rot fungus).